A 429-amino-acid polypeptide reads, in one-letter code: CinA-like protein (429 aa).

This sequence belongs to the CinA family.

This chain is CinA-like protein, found in Prochlorococcus marinus (strain MIT 9313).